We begin with the raw amino-acid sequence, 579 residues long: Zinc finger protein 384 (579 aa).

The disordered stretch occupies residues 171–198; the sequence is TLTEEGGGGGGGGGTVAPPKPPRGRKKK. Positions 175–185 are enriched in gly residues; it reads EGGGGGGGGGT. 8 consecutive C2H2-type zinc fingers follow at residues 229–251, 257–279, 285–307, 318–340, 346–368, 374–398, 404–426, and 434–456; these read YRCR…SKSH, HKCP…IRIH, YSCN…TRIH, HKCP…LRIH, YNCS…TRIH, YKCA…RRQH, FKCH…LSTH, and YTCT…MRKH. A compositionally biased stretch (low complexity) spans 500–513; that stretch reads QAQASQASQQQQQQ. The tract at residues 500 to 553 is disordered; it reads QAQASQASQQQQQQQPPPPQPPHFQSPGAAPQGGGGGDSNQNPPPQCSFDLTPY. The segment covering 514–523 has biased composition (pro residues); that stretch reads QPPPPQPPHF.

It belongs to the krueppel C2H2-type zinc-finger protein family. In terms of assembly, interacts with BCAR1. In terms of tissue distribution, expressed in osteocytes, osteoblasts, and chondrocytes in bone.

The protein resides in the nucleus. In terms of biological role, transcription factor that binds the consensus DNA sequence [GC]AAAAA. Seems to bind and regulate the promoters of MMP1, MMP3, MMP7 and COL1A1. The protein is Zinc finger protein 384 (Znf384) of Rattus norvegicus (Rat).